The sequence spans 149 residues: Arginine repressor (149 aa).

This sequence belongs to the ArgR family.

The protein resides in the cytoplasm. The protein operates within amino-acid biosynthesis; L-arginine biosynthesis [regulation]. Functionally, regulates arginine biosynthesis genes. This Exiguobacterium sibiricum (strain DSM 17290 / CCUG 55495 / CIP 109462 / JCM 13490 / 255-15) protein is Arginine repressor.